A 108-amino-acid chain; its full sequence is UPF0060 membrane protein SH0717 (108 aa).

The next 4 helical transmembrane spans lie at 5-25 (IFIF…IWLW), 31-51 (SSWL…IATF), 60-80 (VYAA…YIVD), and 86-106 (KYDL…ILPS).

The protein belongs to the UPF0060 family.

It localises to the cell membrane. The polypeptide is UPF0060 membrane protein SH0717 (Staphylococcus haemolyticus (strain JCSC1435)).